A 189-amino-acid chain; its full sequence is MAFPTAEEITQRVQQIVGPRGLDVEKVDIKKAGAKSAVIIRIDGDQRPDLDVIEELSDEISRNFDAAESDGELNFGAGYRLEVSTPGFDEPLLAARHFRRQRGHIATFVLNQADDEHATANAANARFVARVGALNADETELAVVLPGKKEPSVKTYPLDQIREAKLEVEFSTPPEAEMSLVNTPFDQLG.

Belongs to the RimP family.

The protein resides in the cytoplasm. Functionally, required for maturation of 30S ribosomal subunits. The protein is Ribosome maturation factor RimP of Corynebacterium kroppenstedtii (strain DSM 44385 / JCM 11950 / CIP 105744 / CCUG 35717).